Reading from the N-terminus, the 442-residue chain is D(2) dopamine receptor A (442 aa).

The Extracellular segment spans residues 1-31 (MDPQNLSMYNDDINNGTNGTAVDQKPHYNYY). Asn5, Asn15, and Asn18 each carry an N-linked (GlcNAc...) asparagine glycan. A helical membrane pass occupies residues 32–54 (AMLLTLLVFVIVFGNVLVCIAVS). Residues 55-64 (REKALQTTTN) lie on the Cytoplasmic side of the membrane. A helical membrane pass occupies residues 65 to 87 (YLIVSLAVADLLVATLVMPWAVY). Residues 88–102 (MEVVGEWRFSRIHCD) are Extracellular-facing. Cys101 and Cys176 are oxidised to a cystine. The helical transmembrane segment at 103 to 124 (IFVTLDVMMCTASILNLCAISI) threads the bilayer. The Cytoplasmic segment spans residues 125–145 (DRYTAVAMPMLYNTRYSSKRR). A helical transmembrane segment spans residues 146–166 (VTVMISVVWVLSFAISCPLLF). Residues 167-182 (GLNNTGSKVCIIDNPA) lie on the Extracellular side of the membrane. The chain crosses the membrane as a helical span at residues 183–207 (FVIYSSIVSFYVPFIVTLLVYVQIY). At 208–372 (IVLRKRRKRV…SQHKEKKATQ (165 aa)) the chain is on the cytoplasmic side. The interval 273-335 (DMEMEMMSST…KNGHPKDSTK (63 aa)) is disordered. Polar residues predominate over residues 304–318 (ATSNQCKNASLTSPV). A compositionally biased stretch (basic and acidic residues) spans 322 to 335 (YKAEKNGHPKDSTK). A helical membrane pass occupies residues 373 to 394 (MLAIVLGVFIICWLPFFIIHIL). At 395 to 408 (NMHCNCNIPQALYS) the chain is on the extracellular side. The cysteines at positions 398 and 400 are disulfide-linked. The chain crosses the membrane as a helical span at residues 409 to 430 (AFTWLGYVNSAVNPIIYTTFNV). Residues 431-442 (EFRKAFIKILHC) lie on the Cytoplasmic side of the membrane. Cys442 carries the S-palmitoyl cysteine lipid modification.

This sequence belongs to the G-protein coupled receptor 1 family. Post-translationally, palmitoylated. Palmitoylation is probably required for proper localization to the plasma membrane and stability of the receptor. As to expression, brain; pituitary.

It localises to the cell membrane. Its subcellular location is the golgi apparatus membrane. Its function is as follows. This is one of the five types (D1 to D5) of receptors for dopamine. The activity of this receptor is mediated by G proteins which inhibits adenylyl cyclase. In Xenopus D2R is involved in the regulation of the melanotrope cells of the intermediate pituitary during background adaptation of the animal. The sequence is that of D(2) dopamine receptor A (drd2-a) from Xenopus laevis (African clawed frog).